The following is a 269-amino-acid chain: Probable molybdenum ABC transporter permease protein HVO_B0370 (269 aa).

The next 6 membrane-spanning stretches (helical) occupy residues 26–46 (LLLA…LVFA), 69–89 (VVAA…LAYW), 100–120 (VILA…GMLL), 140–160 (SLFG…VVTA), 198–218 (ILAG…ATLM), and 243–263 (FPVA…VHAL). One can recognise an ABC transmembrane type-1 domain in the interval 65-258 (ATNSVVAATL…LVGIAVGAIL (194 aa)).

Belongs to the binding-protein-dependent transport system permease family. In terms of assembly, the complex is composed of two ATP-binding proteins, two transmembrane proteins (HVO_B0370) and a solute-binding protein (HVO_B0369).

It is found in the cell membrane. In terms of biological role, part of an ABC transporter complex involved in molybdenum import. Responsible for the translocation of the substrate across the membrane. The chain is Probable molybdenum ABC transporter permease protein HVO_B0370 from Haloferax volcanii (strain ATCC 29605 / DSM 3757 / JCM 8879 / NBRC 14742 / NCIMB 2012 / VKM B-1768 / DS2) (Halobacterium volcanii).